We begin with the raw amino-acid sequence, 474 residues long: Methylenetetrahydrofolate--tRNA-(uracil-5-)-methyltransferase TrmFO (474 aa).

Residue 9 to 14 participates in FAD binding; it reads GGGLAG.

The protein belongs to the MnmG family. TrmFO subfamily. FAD is required as a cofactor.

The protein localises to the cytoplasm. The catalysed reaction is uridine(54) in tRNA + (6R)-5,10-methylene-5,6,7,8-tetrahydrofolate + NADH + H(+) = 5-methyluridine(54) in tRNA + (6S)-5,6,7,8-tetrahydrofolate + NAD(+). The enzyme catalyses uridine(54) in tRNA + (6R)-5,10-methylene-5,6,7,8-tetrahydrofolate + NADPH + H(+) = 5-methyluridine(54) in tRNA + (6S)-5,6,7,8-tetrahydrofolate + NADP(+). Functionally, catalyzes the folate-dependent formation of 5-methyl-uridine at position 54 (M-5-U54) in all tRNAs. The polypeptide is Methylenetetrahydrofolate--tRNA-(uracil-5-)-methyltransferase TrmFO (Methylorubrum extorquens (strain PA1) (Methylobacterium extorquens)).